Here is a 348-residue protein sequence, read N- to C-terminus: Histidinol-phosphate aminotransferase (348 aa).

Lys-207 carries the post-translational modification N6-(pyridoxal phosphate)lysine.

This sequence belongs to the class-II pyridoxal-phosphate-dependent aminotransferase family. Histidinol-phosphate aminotransferase subfamily. As to quaternary structure, homodimer. Requires pyridoxal 5'-phosphate as cofactor.

The catalysed reaction is L-histidinol phosphate + 2-oxoglutarate = 3-(imidazol-4-yl)-2-oxopropyl phosphate + L-glutamate. The protein operates within amino-acid biosynthesis; L-histidine biosynthesis; L-histidine from 5-phospho-alpha-D-ribose 1-diphosphate: step 7/9. In Rippkaea orientalis (strain PCC 8801 / RF-1) (Cyanothece sp. (strain PCC 8801)), this protein is Histidinol-phosphate aminotransferase.